The primary structure comprises 318 residues: Lysophospholipase D GDPD3 (318 aa).

Residues 1–2 (MS) lie on the Cytoplasmic side of the membrane. A helical membrane pass occupies residues 3 to 23 (LLLYYALPALGSYAMLSIFFL). Residues 24–198 (RRPHLLHTPR…KAANPEMPLS (175 aa)) lie on the Extracellular side of the membrane. Residues 39 to 308 (IRLGAHRGGS…DYPTALRHYL (270 aa)) enclose the GP-PDE domain. A divalent metal cation contacts are provided by Glu71, Asp73, and His86. The helical transmembrane segment at 199–221 (FTISRGFWVLLSYYLGLLPFIPI) threads the bilayer. At 222–318 (PEKFFFCFLP…DNHGPAARTS (97 aa)) the chain is on the cytoplasmic side.

It belongs to the glycerophosphoryl diester phosphodiesterase family. As to expression, widely expressed, with high level in kidney and ovary.

The protein localises to the membrane. It localises to the cytoplasm. Its subcellular location is the perinuclear region. It is found in the endoplasmic reticulum. The catalysed reaction is 1-hexadecanoyl-sn-glycero-3-phosphocholine + H2O = 1-hexadecanoyl-sn-glycero-3-phosphate + choline + H(+). It catalyses the reaction 1-hexadecanoyl-sn-glycero-3-phosphocholine + H2O = sn-glycerol 3-phosphocholine + hexadecanoate + H(+). The enzyme catalyses 1-O-(1Z-octadecenyl)-sn-glycero-3-phospho-N-hexadecanoyl-ethanolamine + H2O = 1-O-(1Z-octadecenyl)-sn-glycero-3-phosphate + N-hexadecanoylethanolamine + H(+). It carries out the reaction N-(5Z,8Z,11Z,14Z-eicosatetraenoyl)-1-(9Z-octadecenoyl)-sn-glycero-3-phosphoethanolamine + H2O = N-(5Z,8Z,11Z,14Z-eicosatetraenoyl)-ethanolamine + 1-(9Z-octadecenoyl)-sn-glycero-3-phosphate + H(+). The catalysed reaction is N,1-di-(9Z-octadecenoyl)-sn-glycero-3-phosphoethanolamine + H2O = N-(9Z-octadecenoyl) ethanolamine + 1-(9Z-octadecenoyl)-sn-glycero-3-phosphate + H(+). It catalyses the reaction N-hexadecanoyl-1-(9Z-octadecenoyl)-sn-glycero-3-phosphoethanolamine + H2O = N-hexadecanoylethanolamine + 1-(9Z-octadecenoyl)-sn-glycero-3-phosphate + H(+). The enzyme catalyses 1-O-hexadecyl-sn-glycero-3-phosphocholine + H2O = 1-O-hexadecyl-sn-glycero-3-phosphate + choline + H(+). With respect to regulation, lysophospholipase D activity is stimulated by calcium. Loss of lysophospholipase D activity in presence of EDTA. In terms of biological role, hydrolyzes lysoglycerophospholipids to produce lysophosphatidic acid (LPA) and the corresponding amines. Shows a preference for 1-O-alkyl-sn-glycero-3-phosphocholine (lyso-PAF), lysophosphatidylcholine (lyso-PC) and N-acylethanolamine lysophospholipids. Does not display glycerophosphodiester phosphodiesterase activity, since it cannot hydrolyze either glycerophosphoinositol or glycerophosphocholine. The polypeptide is Lysophospholipase D GDPD3 (Homo sapiens (Human)).